We begin with the raw amino-acid sequence, 337 residues long: 1-aminocyclopropane-1-carboxylate deaminase (337 aa).

Lys50 is modified (N6-(pyridoxal phosphate)lysine). Catalysis depends on Ser77, which acts as the Nucleophile.

The protein belongs to the ACC deaminase/D-cysteine desulfhydrase family. Homotrimer. Pyridoxal 5'-phosphate serves as cofactor.

It catalyses the reaction 1-aminocyclopropane-1-carboxylate + H2O = 2-oxobutanoate + NH4(+). Functionally, catalyzes a cyclopropane ring-opening reaction, the irreversible conversion of 1-aminocyclopropane-1-carboxylate (ACC) to ammonia and alpha-ketobutyrate. Allows growth on ACC as a nitrogen source. In Methylobacterium sp. (strain 4-46), this protein is 1-aminocyclopropane-1-carboxylate deaminase.